The following is a 678-amino-acid chain: Translation initiation factor eIF2B subunit epsilon (678 aa).

Position 172 is a phosphothreonine (T172). The tract at residues 467–489 is disordered; it reads STNELHLSDSESSETSSSSEEDM. S500 is modified (phosphoserine). T503 bears the Phosphothreonine mark. Phosphoserine is present on S506. The 167-residue stretch at 508 to 674 folds into the W2 domain; that stretch reads DFDEGDFNKE…NTAESESESE (167 aa).

The protein belongs to the eIF-2B gamma/epsilon subunits family. Component of the translation initiation factor 2B (eIF2B) complex which is a heterodecamer of two sets of five different subunits: alpha, beta, gamma, delta and epsilon. Subunits alpha, beta and delta comprise a regulatory subcomplex and subunits epsilon and gamma comprise a catalytic subcomplex. Within the complex, the hexameric regulatory complex resides at the center, with the two heterodimeric catalytic subcomplexes bound on opposite sides.

Its subcellular location is the cytoplasm. The protein localises to the cytosol. Its function is as follows. Acts as a component of the translation initiation factor 2B (eIF2B) complex, which catalyzes the exchange of GDP for GTP on the eukaryotic initiation factor 2 (eIF2) complex gamma subunit. Its guanine nucleotide exchange factor activity is repressed when bound to eIF2 complex phosphorylated on the alpha subunit, thereby limiting the amount of methionyl-initiator methionine tRNA available to the ribosome and consequently global translation is repressed. This chain is Translation initiation factor eIF2B subunit epsilon (tif225), found in Schizosaccharomyces pombe (strain 972 / ATCC 24843) (Fission yeast).